A 153-amino-acid polypeptide reads, in one-letter code: Phosphatase NudJ (153 aa).

Residues 3 to 131 enclose the Nudix hydrolase domain; the sequence is KPHVTVACVV…LVAESIRCYQ (129 aa). Residues 36–57 carry the Nudix box motif; the sequence is GHLEADETLVEAAARELWEETG.

This sequence belongs to the Nudix hydrolase family. NudJ subfamily. Monomer. Mg(2+) serves as cofactor.

The protein is Phosphatase NudJ (nudJ) of Escherichia coli O139:H28 (strain E24377A / ETEC).